The sequence spans 90 residues: Acylphosphatase (90 aa).

One can recognise an Acylphosphatase-like domain in the interval 3–89 (ALKIRVEGIV…EGYEDFTIKY (87 aa)). Residues Arg-18 and Asn-36 contribute to the active site.

This sequence belongs to the acylphosphatase family.

The catalysed reaction is an acyl phosphate + H2O = a carboxylate + phosphate + H(+). The chain is Acylphosphatase (acyP) from Thermotoga maritima (strain ATCC 43589 / DSM 3109 / JCM 10099 / NBRC 100826 / MSB8).